Reading from the N-terminus, the 1099-residue chain is Solute carrier family 38 member 10 (1099 aa).

10 consecutive transmembrane segments (helical) span residues 9–31, 36–58, 84–104, 123–143, 153–173, 229–249, 272–292, 323–343, 345–365, and 378–398; these read WGLVTNVVNSIVGVSVLTMPFCF, IVLGALLLVFCSWMTHQSCMFLV, LVETSMIGLMLGSCITFYVVI, TFRVFLLFAVSLCIVLPLSLQ, FSAMALLFYTVFMFVIVLSSF, IFASSLNVVTAFYVMVGFFGY, MIRVGFVMSVAVGFPMMILPC, VLTLSVVFGTMVGGVMIPNVE, ILGFTGATMGSLICFICPALI, and VVLWVGLGILVVSTLTTLSVS. Disordered regions lie at residues 440 to 679 and 720 to 1047; these read DSQE…EEAG and EIRQ…LAPK. Serine 441 carries the phosphoserine modification. Basic and acidic residues-rich tracts occupy residues 441-454, 493-508, 517-528, 544-561, and 586-599; these read SQEKLKPAEDKEVL, EAHRHEPPIPHDKVVV, PEEKKPPPKLPD, ESEKKQDPERGEEGKRPE, and PRKEDSRPGNRDLH. Residues serine 607 and serine 635 each carry the phosphoserine modification. Composition is skewed to basic and acidic residues over residues 653–663, 720–735, and 749–766; these read EAAEQREKNEA, EIRQQRQEGEEDKPKP, and GQEEEAEHAGAPDEHAGE. Residues 698–734 adopt a coiled-coil conformation; it reads VQQKRLLDQQEKLLAVIEEQHKEIRQQRQEGEEDKPK. The residue at position 767 (threonine 767) is a Phosphothreonine. Composition is skewed to basic and acidic residues over residues 793-802, 852-894, 917-928, 957-969, and 1010-1022; these read KGQHPLEEVK, EPVH…ETGK, EDSHSKSRHSEP, KSQDSHPEVRSEG, and QKPENAKPNRDLK. Position 886 is a phosphoserine (serine 886).

This sequence belongs to the amino acid/polyamine transporter 2 family. As to expression, only expressed in the pituitary, adrenal gland, stomach and in the upper gastrointestinal tract.

It localises to the membrane. It catalyses the reaction L-glutamate(out) = L-glutamate(in). The catalysed reaction is L-glutamine(out) = L-glutamine(in). It carries out the reaction L-alanine(in) = L-alanine(out). The enzyme catalyses L-serine(in) = L-serine(out). It catalyses the reaction L-leucine(in) = L-leucine(out). Facilitates bidirectional transport of amino acids. May act as a glutamate sensor that regulates glutamate-glutamine cycle and mTOR signaling in the brain. The transport mechanism remains to be elucidated. This is Solute carrier family 38 member 10 from Rattus norvegicus (Rat).